The sequence spans 578 residues: Zinc finger protein with KRAB and SCAN domains 8 (578 aa).

Residues 1–20 (MAEESRKPSAPSPPDQTPEE) form a disordered region. Position 12 is a phosphoserine (Ser12). Residue Lys26 forms a Glycyl lysine isopeptide (Lys-Gly) (interchain with G-Cter in SUMO2) linkage. Positions 51 to 133 (RLRFRQLCYQ…TLLEDLERQI (83 aa)) constitute an SCAN box domain. The segment at 158–205 (ASAPEPPNTQLQSEATQHKSPVPQESQERSMSTSQSPTRSQKGSSGDQ) is disordered. The segment covering 165 to 205 (NTQLQSEATQHKSPVPQESQERSMSTSQSPTRSQKGSSGDQ) has biased composition (polar residues). Glycyl lysine isopeptide (Lys-Gly) (interchain with G-Cter in SUMO2) cross-links involve residues Lys176 and Lys199. Phosphoserine is present on Ser201. The KRAB domain occupies 220–316 (EKIEDMAVSL…GRLERQRGNP (97 aa)). Residues Lys221, Lys272, and Lys288 each participate in a glycyl lysine isopeptide (Lys-Gly) (interchain with G-Cter in SUMO2) cross-link. 2 consecutive C2H2-type zinc fingers follow at residues 322–344 (HKCD…WRIH) and 350–372 (YQCN…QDIH). Residues Lys374 and Lys376 each participate in a glycyl lysine isopeptide (Lys-Gly) (interchain with G-Cter in SUMO2) cross-link. 7 C2H2-type zinc fingers span residues 378 to 400 (YHCK…QRIH), 406 to 428 (YQCN…QRIH), 434 to 456 (YECN…QRIH), 462 to 484 (YECD…QRSH), 490 to 512 (YKCN…QRIH), 518 to 540 (YKCK…LRIH), and 546 to 568 (YQCN…QRIH). Glycyl lysine isopeptide (Lys-Gly) (interchain with G-Cter in SUMO2) cross-links involve residues Lys413 and Lys441. Residue Lys502 forms a Glycyl lysine isopeptide (Lys-Gly) (interchain with G-Cter in SUMO2) linkage. Lys572 is covalently cross-linked (Glycyl lysine isopeptide (Lys-Gly) (interchain with G-Cter in SUMO2)).

The protein belongs to the krueppel C2H2-type zinc-finger protein family.

The protein localises to the nucleus. May be involved in transcriptional regulation. The protein is Zinc finger protein with KRAB and SCAN domains 8 (ZKSCAN8) of Pan paniscus (Pygmy chimpanzee).